The sequence spans 237 residues: Protein GrpE (237 aa).

2 disordered regions span residues 1–52 and 200–237; these read MSGD…RLQQ and KVSM…QPGV. The span at 27–40 shows a compositional bias: polar residues; that stretch reads ASINSDEGQSSAQS. A compositionally biased stretch (low complexity) spans 204-218; sequence GPGPQSGASPSSAQP.

The protein belongs to the GrpE family. As to quaternary structure, homodimer.

The protein resides in the cytoplasm. Participates actively in the response to hyperosmotic and heat shock by preventing the aggregation of stress-denatured proteins, in association with DnaK and GrpE. It is the nucleotide exchange factor for DnaK and may function as a thermosensor. Unfolded proteins bind initially to DnaJ; upon interaction with the DnaJ-bound protein, DnaK hydrolyzes its bound ATP, resulting in the formation of a stable complex. GrpE releases ADP from DnaK; ATP binding to DnaK triggers the release of the substrate protein, thus completing the reaction cycle. Several rounds of ATP-dependent interactions between DnaJ, DnaK and GrpE are required for fully efficient folding. This is Protein GrpE from Prochlorococcus marinus (strain MIT 9313).